The chain runs to 92 residues: Phospholemman (92 aa).

The N-terminal stretch at 1 to 20 (MASLSHILVLCVGLLAMVNA) is a signal peptide. At 21 to 35 (EAPQEHDPFTYDYQS) the chain is on the extracellular side. A helical membrane pass occupies residues 36–56 (LRIGGLIIAGILFILGILIVL). At 57–92 (SRRCRCKFNQQQRTGEPDEEEGTFRSSIRRLSTRRR) the chain is on the cytoplasmic side. C60 carries the S-palmitoyl cysteine lipid modification. C62 carries the S-glutathionyl cysteine; alternate modification. Residue C62 is the site of S-palmitoyl cysteine; alternate attachment. The segment at 65–92 (NQQQRTGEPDEEEGTFRSSIRRLSTRRR) is disordered. T79 carries the phosphothreonine modification. Phosphoserine is present on S82. A Phosphoserine; by PKA and PKC modification is found at S83. Residues 83-92 (SIRRLSTRRR) are compositionally biased toward basic residues. S88 is subject to Phosphoserine; by PKA. Position 89 is a phosphothreonine; by PKC (T89).

The protein belongs to the FXYD family. As to quaternary structure, homotetramer. Monomer. Regulatory subunit of the sodium/potassium-transporting ATPase (NKA) which is composed of a catalytic alpha subunit, an auxiliary non-catalytic beta subunit and an additional regulatory subunit. The monomeric form associates with NKA while the oligomeric form does not. Interacts with the catalytic alpha-1 subunit ATP1A1. Also interacts with the catalytic alpha-2 and alpha-3 subunits ATP1A2 and ATP1A3. Very little interaction with ATP1A1, ATP1A2 or ATP1A3 when phosphorylated at Ser-83. Interacts with the non-catalytic beta-1 subunit ATP1B1. Oxidative stress decreases interaction with ATP1A1 but increases interaction with ATP1B1. Major plasma membrane substrate for cAMP-dependent protein kinase (PKA) and protein kinase C (PKC) in several different tissues. Phosphorylated in response to insulin and adrenergic stimulation. Phosphorylation at Ser-88 stimulates sodium/potassium-transporting ATPase activity while the unphosphorylated form inhibits sodium/potassium-transporting ATPase activity. Phosphorylation increases tetramerization, decreases binding to ATP1A1 and reduces inhibition of ATP1A1 activity. Phosphorylation at Ser-83 leads to greatly reduced interaction with ATP1A1, ATP1A2 and ATP1A3. May be phosphorylated by DMPK. Post-translationally, palmitoylation increases half-life and stability and is enhanced upon phosphorylation at Ser-88 by PKA. In terms of tissue distribution, in the brain, detected in cerebellum and choroid plexus (at protein level).

The protein localises to the cell membrane. The protein resides in the sarcolemma. It localises to the apical cell membrane. It is found in the membrane. Its subcellular location is the caveola. The protein localises to the T-tubule. In terms of biological role, associates with and regulates the activity of the sodium/potassium-transporting ATPase (NKA) which transports Na(+) out of the cell and K(+) into the cell. Inhibits NKA activity in its unphosphorylated state and stimulates activity when phosphorylated. Reduces glutathionylation of the NKA beta-1 subunit ATP1B1, thus reversing glutathionylation-mediated inhibition of ATP1B1. Contributes to female sexual development by maintaining the excitability of neurons which secrete gonadotropin-releasing hormone. The protein is Phospholemman of Bos taurus (Bovine).